Here is a 511-residue protein sequence, read N- to C-terminus: Maturase K (511 aa).

This sequence belongs to the intron maturase 2 family. MatK subfamily.

The protein resides in the plastid. It localises to the chloroplast. Functionally, usually encoded in the trnK tRNA gene intron. Probably assists in splicing its own and other chloroplast group II introns. This Adesmia lanata protein is Maturase K.